The chain runs to 287 residues: Pantothenate synthetase (287 aa).

30–37 (MGNLHDGH) serves as a coordination point for ATP. The active-site Proton donor is His37. (R)-pantoate is bound at residue Gln61. Gln61 serves as a coordination point for beta-alanine. Residue 148–151 (GQKD) participates in ATP binding. Gln154 is a binding site for (R)-pantoate. Residues Ile177 and 185 to 188 (LSSR) contribute to the ATP site.

This sequence belongs to the pantothenate synthetase family. As to quaternary structure, homodimer.

It is found in the cytoplasm. The catalysed reaction is (R)-pantoate + beta-alanine + ATP = (R)-pantothenate + AMP + diphosphate + H(+). It functions in the pathway cofactor biosynthesis; (R)-pantothenate biosynthesis; (R)-pantothenate from (R)-pantoate and beta-alanine: step 1/1. Its function is as follows. Catalyzes the condensation of pantoate with beta-alanine in an ATP-dependent reaction via a pantoyl-adenylate intermediate. This chain is Pantothenate synthetase, found in Psychrobacter cryohalolentis (strain ATCC BAA-1226 / DSM 17306 / VKM B-2378 / K5).